The following is a 348-amino-acid chain: Dihydroorotate dehydrogenase (quinone) (348 aa).

FMN-binding positions include 65 to 69 (AGLDK) and threonine 89. Lysine 69 provides a ligand contact to substrate. 114 to 118 (NRLGF) serves as a coordination point for substrate. 2 residues coordinate FMN: asparagine 147 and asparagine 180. A substrate-binding site is contributed by asparagine 180. Residue serine 183 is the Nucleophile of the active site. Asparagine 185 provides a ligand contact to substrate. Positions 225 and 253 each coordinate FMN. Residue 254-255 (NT) participates in substrate binding. FMN-binding positions include glycine 276, glycine 305, and 326–327 (YS).

The protein belongs to the dihydroorotate dehydrogenase family. Type 2 subfamily. As to quaternary structure, monomer. FMN is required as a cofactor.

It is found in the cell membrane. It catalyses the reaction (S)-dihydroorotate + a quinone = orotate + a quinol. Its pathway is pyrimidine metabolism; UMP biosynthesis via de novo pathway; orotate from (S)-dihydroorotate (quinone route): step 1/1. Catalyzes the conversion of dihydroorotate to orotate with quinone as electron acceptor. The protein is Dihydroorotate dehydrogenase (quinone) of Delftia acidovorans (strain DSM 14801 / SPH-1).